The chain runs to 477 residues: Delayed-rectifier potassium channel regulatory subunit KCNS2 (477 aa).

The Cytoplasmic segment spans residues 1 to 184; it reads MTRQSLWDVS…LALDNPGYSV (184 aa). Residues 185–206 traverse the membrane as a helical segment; that stretch reads LSRVFSVLSILVVLGSIITMCL. At 207–225 the chain is on the extracellular side; the sequence is NSLPDFQIPDSQGNPGEDP. The helical transmembrane segment at 226-248 threads the bilayer; that stretch reads RFEIVEHFGIAWFTFELVARFAV. The Cytoplasmic segment spans residues 249–259; that stretch reads APDFLKFFKNA. The chain crosses the membrane as a helical span at residues 260–280; that stretch reads LNLIDLMSIVPFYITLVVNLV. Residues 281 to 290 are Extracellular-facing; sequence VESSPTLANL. The helical; Voltage-sensor transmembrane segment at 291 to 311 threads the bilayer; it reads GRVAQVLRLMRIFRILKLARH. The Cytoplasmic segment spans residues 312–326; that stretch reads STGLRSLGATLKYSY. The chain crosses the membrane as a helical span at residues 327–348; sequence KEVGLLLLYLSVGISIFSVVAY. Topologically, residues 349-361 are extracellular; the sequence is TIEKEENEGLATI. The segment at residues 362–373 is an intramembrane region (helical); it reads PACWWWATVSMT. The Selectivity filter motif lies at 374 to 379; it reads TVGYGD. The stretch at 374–381 is an intramembrane region; sequence TVGYGDVV. Topologically, residues 382–388 are extracellular; it reads PGTTAGK. A helical membrane pass occupies residues 389–417; that stretch reads LTASACILAGILVVVLPITLIFNKFSHFY. Over 418–477 the chain is Cytoplasmic; it reads RRQKQLESAMRSCDFGDGMKEVPSVNLRDYYAHKVKSLMASLTNMSRSSPSELSLDDSLH.

It belongs to the potassium channel family. S (TC 1.A.1.2) subfamily. Kv9.2/KCNS2 sub-subfamily. In terms of assembly, heterotetramer with KCNB1 and KCNB2. Does not form homomultimers. In terms of tissue distribution, detected in brain, but not in the other tissues tested. Expression was highest in the olfactory bulb, cerebral cortex, hippocampus, habenula, basolateral amygdaloid nuclei and cerebellum.

It localises to the cell membrane. Functionally, potassium channel regulatory subunit that modulate the delayed rectifier voltage-gated potassium channel activity of KCNB1 and KCNB2 by altering their kinetics, expression levels, and shifting the half-inactivation potential to more polarized values. While it does not form functional channels on its own, it can form functional heterotetrameric channels with KCNB1 and KCNB2. Each regulatory subunit has unique regulatory properties that can lead to extensive inhibition, significant changes in kinetics, and/or substantial shifts in the voltage dependencies of the inactivation process. This is Delayed-rectifier potassium channel regulatory subunit KCNS2 from Mus musculus (Mouse).